A 491-amino-acid polypeptide reads, in one-letter code: Cobyric acid synthase (491 aa).

The region spanning 253 to 429 is the GATase cobBQ-type domain; the sequence is AHRVAVVRLP…WHGSLEGDAL (177 aa). C334 functions as the Nucleophile in the catalytic mechanism. H421 is a catalytic residue.

It belongs to the CobB/CobQ family. CobQ subfamily.

Its pathway is cofactor biosynthesis; adenosylcobalamin biosynthesis. Its function is as follows. Catalyzes amidations at positions B, D, E, and G on adenosylcobyrinic A,C-diamide. NH(2) groups are provided by glutamine, and one molecule of ATP is hydrogenolyzed for each amidation. The polypeptide is Cobyric acid synthase (Mycobacterium marinum (strain ATCC BAA-535 / M)).